Reading from the N-terminus, the 137-residue chain is Bombinin-like peptides 1 (137 aa).

The N-terminal stretch at 1–18 (MNFKYIVAVSILIASAYA) is a signal peptide. An Asparagine amide modification is found at N70. Residues 91–112 (LDSFEHPEEASEKETRGFNQEE) form a disordered region. I118 carries the post-translational modification D-allo-isoleucine. I136 is modified (isoleucine amide).

Belongs to the bombinin family. In terms of tissue distribution, expressed by the skin glands.

The protein localises to the secreted. Has antimicrobial activity, but no hemolytic activity. Preliminary evidence indicates that this peptide does not lyse and thus kill the bacteria by its antimicrobial activity. Its function is as follows. Bombinin H has antibacterial and hemolytic activity. The protein is Bombinin-like peptides 1 of Bombina variegata (Yellow-bellied toad).